The following is a 142-amino-acid chain: Alpha-lactalbumin (142 aa).

An N-terminal signal peptide occupies residues 1-18; it reads MMSFVSLLLVGILFHATQ. In terms of domain architecture, C-type lysozyme spans 20–142; it reads EQLTKCEVFR…KLDQWLCEKL (123 aa). 4 disulfide bridges follow: Cys25/Cys139, Cys47/Cys130, Cys80/Cys96, and Cys92/Cys110. Residues Asn64 and Asn93 are each glycosylated (N-linked (GlcNAc...) asparagine). Ca(2+) contacts are provided by Lys98, Asp101, Asp103, Asp106, and Asp107.

This sequence belongs to the glycosyl hydrolase 22 family. As to quaternary structure, lactose synthase (LS) is a heterodimer of a catalytic component, beta1,4-galactosyltransferase (beta4Gal-T1) and a regulatory component, alpha-lactalbumin (LA). In terms of tissue distribution, mammary gland specific. Secreted in milk.

The protein resides in the secreted. Regulatory subunit of lactose synthase, changes the substrate specificity of galactosyltransferase in the mammary gland making glucose a good acceptor substrate for this enzyme. This enables LS to synthesize lactose, the major carbohydrate component of milk. In other tissues, galactosyltransferase transfers galactose onto the N-acetylglucosamine of the oligosaccharide chains in glycoproteins. This Bubalus bubalis (Domestic water buffalo) protein is Alpha-lactalbumin (LALBA).